The following is a 77-amino-acid chain: Translation initiation factor IF-1, chloroplastic (77 aa).

The S1-like domain occupies 1 to 71; that stretch reads MKEQKWTHEG…TRGRIIYRLR (71 aa).

Belongs to the IF-1 family. As to quaternary structure, component of the 30S ribosomal translation pre-initiation complex which assembles on the 30S ribosome in the order IF-2 and IF-3, IF-1 and N-formylmethionyl-tRNA(fMet); mRNA recruitment can occur at any time during PIC assembly.

Its subcellular location is the plastid. The protein resides in the chloroplast. One of the essential components for the initiation of protein synthesis. Stabilizes the binding of IF-2 and IF-3 on the 30S subunit to which N-formylmethionyl-tRNA(fMet) subsequently binds. Helps modulate mRNA selection, yielding the 30S pre-initiation complex (PIC). Upon addition of the 50S ribosomal subunit IF-1, IF-2 and IF-3 are released leaving the mature 70S translation initiation complex. In Coffea arabica (Arabian coffee), this protein is Translation initiation factor IF-1, chloroplastic.